Here is a 616-residue protein sequence, read N- to C-terminus: DNA mismatch repair protein MutL (616 aa).

This sequence belongs to the DNA mismatch repair MutL/HexB family.

In terms of biological role, this protein is involved in the repair of mismatches in DNA. It is required for dam-dependent methyl-directed DNA mismatch repair. May act as a 'molecular matchmaker', a protein that promotes the formation of a stable complex between two or more DNA-binding proteins in an ATP-dependent manner without itself being part of a final effector complex. This chain is DNA mismatch repair protein MutL, found in Syntrophus aciditrophicus (strain SB).